We begin with the raw amino-acid sequence, 286 residues long: Bifunctional protein FolD (286 aa).

NADP(+) contacts are provided by residues 165 to 167 (GRS), S190, and I231.

Belongs to the tetrahydrofolate dehydrogenase/cyclohydrolase family. Homodimer.

The enzyme catalyses (6R)-5,10-methylene-5,6,7,8-tetrahydrofolate + NADP(+) = (6R)-5,10-methenyltetrahydrofolate + NADPH. It catalyses the reaction (6R)-5,10-methenyltetrahydrofolate + H2O = (6R)-10-formyltetrahydrofolate + H(+). It functions in the pathway one-carbon metabolism; tetrahydrofolate interconversion. Its function is as follows. Catalyzes the oxidation of 5,10-methylenetetrahydrofolate to 5,10-methenyltetrahydrofolate and then the hydrolysis of 5,10-methenyltetrahydrofolate to 10-formyltetrahydrofolate. The polypeptide is Bifunctional protein FolD (Thermodesulfovibrio yellowstonii (strain ATCC 51303 / DSM 11347 / YP87)).